The primary structure comprises 331 residues: Glutamyl-Q tRNA(Asp) synthetase (331 aa).

The span at 1–30 shows a compositional bias: polar residues; the sequence is MVQQAVIQRSANQQLSNQRSANQRATNQPT. The disordered stretch occupies residues 1-36; it reads MVQQAVIQRSANQQLSNQRSANQRATNQPTEYVGRF. Residues 35-39 and glutamate 71 each bind L-glutamate; that span reads RFAPS. A 'HIGH' region motif is present at residues 38–48; sequence PSPSGDLHFGS. Zn(2+) is bound by residues cysteine 127, cysteine 129, tyrosine 141, and cysteine 145. Residues tyrosine 198 and arginine 216 each contribute to the L-glutamate site. A 'KMSKS' region motif is present at residues 254-258; the sequence is KLSKQ. Lysine 257 provides a ligand contact to ATP.

It belongs to the class-I aminoacyl-tRNA synthetase family. GluQ subfamily. The cofactor is Zn(2+).

Catalyzes the tRNA-independent activation of glutamate in presence of ATP and the subsequent transfer of glutamate onto a tRNA(Asp). Glutamate is transferred on the 2-amino-5-(4,5-dihydroxy-2-cyclopenten-1-yl) moiety of the queuosine in the wobble position of the QUC anticodon. This Yersinia pseudotuberculosis serotype I (strain IP32953) protein is Glutamyl-Q tRNA(Asp) synthetase.